The sequence spans 887 residues: Translation initiation factor IF-2 (887 aa).

3 disordered regions span residues 31–87 (KLAQ…PRRI), 94–113 (SFVS…DSDA), and 129–285 (VETE…KWRK). Residues 42–59 (SSSEKPSTKVPEKIAKEK) are compositionally biased toward basic and acidic residues. 2 stretches are compositionally biased toward basic and acidic residues: residues 150 to 171 (VVAK…KEPP) and 199 to 212 (PKKE…EKTK). Over residues 213-223 (TTQTKPQQSSD) the composition is skewed to low complexity. Residues 241–273 (YRRDVSKKSGSDFRDRAKKDDNPKAFTGRDRYG) show a composition bias toward basic and acidic residues. The tr-type G domain occupies 393 to 562 (TRPPIVAFMG…ALQAEVLELK (170 aa)). The interval 402-409 (GHVDHGKT) is G1. 402–409 (GHVDHGKT) contacts GTP. The G2 stretch occupies residues 427–431 (AITQH). Residues 448-451 (DTPG) are G3. GTP contacts are provided by residues 448 to 452 (DTPGH) and 502 to 505 (NKCD). The interval 502-505 (NKCD) is G4. The interval 538–540 (SAK) is G5.

The protein belongs to the TRAFAC class translation factor GTPase superfamily. Classic translation factor GTPase family. IF-2 subfamily.

It localises to the cytoplasm. One of the essential components for the initiation of protein synthesis. Protects formylmethionyl-tRNA from spontaneous hydrolysis and promotes its binding to the 30S ribosomal subunits. Also involved in the hydrolysis of GTP during the formation of the 70S ribosomal complex. The chain is Translation initiation factor IF-2 from Chlamydia caviae (strain ATCC VR-813 / DSM 19441 / 03DC25 / GPIC) (Chlamydophila caviae).